The following is a 500-amino-acid chain: Proline--tRNA ligase (500 aa).

The protein belongs to the class-II aminoacyl-tRNA synthetase family. ProS type 3 subfamily. As to quaternary structure, homodimer.

It localises to the cytoplasm. It carries out the reaction tRNA(Pro) + L-proline + ATP = L-prolyl-tRNA(Pro) + AMP + diphosphate. In terms of biological role, catalyzes the attachment of proline to tRNA(Pro) in a two-step reaction: proline is first activated by ATP to form Pro-AMP and then transferred to the acceptor end of tRNA(Pro). This is Proline--tRNA ligase from Paramagnetospirillum magneticum (strain ATCC 700264 / AMB-1) (Magnetospirillum magneticum).